We begin with the raw amino-acid sequence, 456 residues long: Bifunctional protein GlmU (456 aa).

Residues M1–R229 form a pyrophosphorylase region. Residues L11 to G14, K25, Q76, G81 to T82, Y103 to D105, G140, E154, N169, and N227 contribute to the UDP-N-acetyl-alpha-D-glucosamine site. Residue D105 coordinates Mg(2+). N227 serves as a coordination point for Mg(2+). The segment at L230–A250 is linker. The segment at G251–K456 is N-acetyltransferase. Residues R333 and K351 each contribute to the UDP-N-acetyl-alpha-D-glucosamine site. Catalysis depends on H363, which acts as the Proton acceptor. UDP-N-acetyl-alpha-D-glucosamine contacts are provided by Y366 and N377. Acetyl-CoA is bound by residues A380, N386–Y387, S405, A423, and R440.

In the N-terminal section; belongs to the N-acetylglucosamine-1-phosphate uridyltransferase family. This sequence in the C-terminal section; belongs to the transferase hexapeptide repeat family. In terms of assembly, homotrimer. Requires Mg(2+) as cofactor.

Its subcellular location is the cytoplasm. It catalyses the reaction alpha-D-glucosamine 1-phosphate + acetyl-CoA = N-acetyl-alpha-D-glucosamine 1-phosphate + CoA + H(+). The enzyme catalyses N-acetyl-alpha-D-glucosamine 1-phosphate + UTP + H(+) = UDP-N-acetyl-alpha-D-glucosamine + diphosphate. Its pathway is nucleotide-sugar biosynthesis; UDP-N-acetyl-alpha-D-glucosamine biosynthesis; N-acetyl-alpha-D-glucosamine 1-phosphate from alpha-D-glucosamine 6-phosphate (route II): step 2/2. It functions in the pathway nucleotide-sugar biosynthesis; UDP-N-acetyl-alpha-D-glucosamine biosynthesis; UDP-N-acetyl-alpha-D-glucosamine from N-acetyl-alpha-D-glucosamine 1-phosphate: step 1/1. The protein operates within bacterial outer membrane biogenesis; LPS lipid A biosynthesis. Catalyzes the last two sequential reactions in the de novo biosynthetic pathway for UDP-N-acetylglucosamine (UDP-GlcNAc). The C-terminal domain catalyzes the transfer of acetyl group from acetyl coenzyme A to glucosamine-1-phosphate (GlcN-1-P) to produce N-acetylglucosamine-1-phosphate (GlcNAc-1-P), which is converted into UDP-GlcNAc by the transfer of uridine 5-monophosphate (from uridine 5-triphosphate), a reaction catalyzed by the N-terminal domain. This chain is Bifunctional protein GlmU, found in Shigella sonnei (strain Ss046).